The sequence spans 291 residues: m-AAA protease-interacting protein 1, mitochondrial (291 aa).

A mitochondrion-targeting transit peptide spans 1–96 (MALAARLLPL…SLPASPSRSY (96 aa)).

As to quaternary structure, interacts with AFG3L2. Interacts with SPG7. Interacts with SMDT1/EMRE (via the N-terminal transit peptide); interaction is direct and takes place before maturation of SMDT1/EMRE.

The protein resides in the mitochondrion matrix. Its function is as follows. Promotes sorting of SMDT1/EMRE in mitochondria by ensuring its maturation. Interacts with the transit peptide region of SMDT1/EMRE precursor protein in the mitochondrial matrix, leading to protect it against protein degradation by YME1L1, thereby ensuring SMDT1/EMRE maturation by the mitochondrial processing peptidase (PMPCA and PMPCB). The polypeptide is m-AAA protease-interacting protein 1, mitochondrial (Mus musculus (Mouse)).